The following is a 611-amino-acid chain: Pyrichalasin H cluster regulator pyiR (611 aa).

The zn(2)-C6 fungal-type DNA-binding region spans 11 to 47; it reads CDRCRGHKLRCIRLDPGPNDTGALLPCKRCVKAGAEC. 6 disordered regions span residues 53–128, 169–192, 265–291, 401–427, 521–550, and 564–593; these read LSVK…LPPW, ALAA…DGTT, GGAG…GRSS, AHEG…AAPQ, RGGL…SDER, and SWFT…RTVE. Basic and acidic residues predominate over residues 59–69; it reads GDGHHSAHRAT. The segment covering 98–109 has biased composition (low complexity); the sequence is PTQPAPQRQTQR. Residues 265-279 are compositionally biased toward polar residues; the sequence is GGAGSQSLRDQQMQQ. Residues 572 to 587 are compositionally biased toward gly residues; the sequence is GGSGGSGPGEGTGDSN.

It localises to the nucleus. In terms of biological role, transcription factor that specifically regulates the expression of the gene cluster that mediates the biosynthesis of the mycotoxin pyrichalasin H, a tyrosine-derived cytochalasan that inhibits the growth of rice seedlings, but also inhibits lymphocyte capping and actin polymerization and alters cell morphology. Pyrichalasin H is indicated as the responsible agent for the genus-specific pathogenicity of M.grisea toward crabgrass. The chain is Pyrichalasin H cluster regulator pyiR from Pyricularia grisea (Crabgrass-specific blast fungus).